The following is a 166-amino-acid chain: Endoribonuclease YbeY (166 aa).

Zn(2+) is bound by residues His136, His140, and His146.

This sequence belongs to the endoribonuclease YbeY family. Zn(2+) is required as a cofactor.

It localises to the cytoplasm. In terms of biological role, single strand-specific metallo-endoribonuclease involved in late-stage 70S ribosome quality control and in maturation of the 3' terminus of the 16S rRNA. In Synechococcus sp. (strain CC9605), this protein is Endoribonuclease YbeY.